We begin with the raw amino-acid sequence, 396 residues long: L-lactate dehydrogenase (396 aa).

Residues 1–380 (MIISAASDYR…SGDSLVQELG (380 aa)) form the FMN hydroxy acid dehydrogenase domain. Residue tyrosine 24 coordinates substrate. FMN-binding residues include serine 106 and glutamine 127. Tyrosine 129 contributes to the substrate binding site. FMN is bound at residue threonine 155. Arginine 164 serves as a coordination point for substrate. Lysine 251 lines the FMN pocket. The active-site Proton acceptor is the histidine 275. Arginine 278 provides a ligand contact to substrate. FMN is bound at residue 306–330 (DSGIRNGLDVVRMIALGADTVLLGR).

The protein belongs to the FMN-dependent alpha-hydroxy acid dehydrogenase family. The cofactor is FMN.

The protein localises to the cell inner membrane. It catalyses the reaction (S)-lactate + A = pyruvate + AH2. In terms of biological role, catalyzes the conversion of L-lactate to pyruvate. Is coupled to the respiratory chain. The polypeptide is L-lactate dehydrogenase (Salmonella typhimurium (strain LT2 / SGSC1412 / ATCC 700720)).